Here is a 328-residue protein sequence, read N- to C-terminus: Carbonic anhydrase, chloroplastic (328 aa).

Positions 1–15 (MSTSSINGFSLSSLS) are enriched in low complexity. Residues 1–26 (MSTSSINGFSLSSLSPAKTSTKRTTL) are disordered. Residues 1-70 (MSTSSINGFS…IITPVLREEM (70 aa)) constitute a chloroplast transit peptide.

Belongs to the beta-class carbonic anhydrase family. In terms of assembly, homohexamer.

The protein localises to the plastid. Its subcellular location is the chloroplast stroma. It carries out the reaction hydrogencarbonate + H(+) = CO2 + H2O. Reversible hydration of carbon dioxide. This chain is Carbonic anhydrase, chloroplastic, found in Pisum sativum (Garden pea).